The following is a 124-amino-acid chain: Small ribosomal subunit protein uS10z/uS10x (124 aa).

The protein belongs to the universal ribosomal protein uS10 family.

This Arabidopsis thaliana (Mouse-ear cress) protein is Small ribosomal subunit protein uS10z/uS10x (RPS20A).